Reading from the N-terminus, the 159-residue chain is NAD(P)H-quinone oxidoreductase subunit J, chloroplastic (159 aa).

Belongs to the complex I 30 kDa subunit family. NDH is composed of at least 16 different subunits, 5 of which are encoded in the nucleus.

It is found in the plastid. The protein resides in the chloroplast thylakoid membrane. It catalyses the reaction a plastoquinone + NADH + (n+1) H(+)(in) = a plastoquinol + NAD(+) + n H(+)(out). The catalysed reaction is a plastoquinone + NADPH + (n+1) H(+)(in) = a plastoquinol + NADP(+) + n H(+)(out). Functionally, NDH shuttles electrons from NAD(P)H:plastoquinone, via FMN and iron-sulfur (Fe-S) centers, to quinones in the photosynthetic chain and possibly in a chloroplast respiratory chain. The immediate electron acceptor for the enzyme in this species is believed to be plastoquinone. Couples the redox reaction to proton translocation, and thus conserves the redox energy in a proton gradient. The protein is NAD(P)H-quinone oxidoreductase subunit J, chloroplastic of Agrostis stolonifera (Creeping bentgrass).